The sequence spans 134 residues: UPF0756 membrane protein YeaL (134 aa).

A run of 4 helical transmembrane segments spans residues 14–34, 51–71, 86–106, and 110–130; these read ALGF…LIIV, LTVG…SGTL, LVAI…ITLM, and PQLV…FRGV.

It belongs to the UPF0756 family.

Its subcellular location is the cell membrane. This chain is UPF0756 membrane protein YeaL, found in Salmonella typhimurium (strain LT2 / SGSC1412 / ATCC 700720).